The sequence spans 479 residues: Transcription factor CP2-like protein 1 (479 aa).

Residues 1–52 form a mediate transcriptional repression region; sequence MLFWHTQPEHYNQHNSGSYLRDVLALPIFKQEEPQLSPENGARLPPLQYVLC. Positions 43–280 constitute a Grh/CP2 DB domain; the sequence is RLPPLQYVLC…PSPSYNGSPN (238 aa). Disordered stretches follow at residues 219-248 and 260-301; these read KPKGADRKQKTDREKMEKRTAQEKEKYQPS and WPDV…LPLG. A compositionally biased stretch (basic and acidic residues) spans 221-245; the sequence is KGADRKQKTDREKMEKRTAQEKEKY. The segment at 261–365 is SAM2-like domain; it reads PDVPYQANNT…IRLFNAIKGR (105 aa). Residues 266 to 292 are compositionally biased toward polar residues; that stretch reads QANNTPSPSYNGSPNSFGLREGNSSPN.

Belongs to the grh/CP2 family. CP2 subfamily. As to quaternary structure, forms homohexamers via its SAM-like domain. Interacts with Mta1; which is indispensable for Tfcp2l1-mediated self-renewal-promoting effect and endoderm-inhibiting action. As to expression, highly expressed in placenta, testis, small intestine, kidney and stomach. Low levels of expression in lung, mesenteric lymph nodes, muscle, ovary, and thymus. No expression was detected in brain, heart, liver, and spleen. Expressed in eccrine glands in the palm. Expression is prominent in both kidney collecting ducts intercalated (IC) and principal (PC) cells. Also expressed in the thick limb of Henle and connecting segments of the nephron.

Its subcellular location is the nucleus. Transcription factor that facilitates establishment and maintenance of pluripotency in embryonic stem cells (ESCs). With Klf2, acts as the major effector of self-renewal that mediates induction of pluripotency downstream of LIF/Stat3 and Wnt/beta-catenin signaling. Required for normal duct development in the salivary gland and kidney. Coordinates the development of the kidney collecting ducts intercalated (IC) and principal (PC) cells, which regulate acid-base and salt-water homeostasis, respectively. Regulates the expression of IC genes including subunits B1 and D2 of the V-ATPase complex, Oxgr1, Ca12, Slc4a1, Aqp6 and IC-specific transcription factor Foxi1. Also regulates the expression of Jag1 and subsequent notch signaling in the collecting duct. Jag1 initiates notch signaling in PCs but inhibits notch signaling in ICs. Acts as a transcriptional suppressor that may suppress UBP1-mediated transcriptional activation. Modulates the placental expression of CYP11A1. This Mus musculus (Mouse) protein is Transcription factor CP2-like protein 1 (Tfcp2l1).